A 212-amino-acid polypeptide reads, in one-letter code: Large ribosomal subunit protein uL3 (212 aa).

Residues 119–147 (YQGNIKRWGQSRGPETHGSRYHRIPGSMG) are disordered.

This sequence belongs to the universal ribosomal protein uL3 family. As to quaternary structure, part of the 50S ribosomal subunit. Forms a cluster with proteins L14 and L19.

Its function is as follows. One of the primary rRNA binding proteins, it binds directly near the 3'-end of the 23S rRNA, where it nucleates assembly of the 50S subunit. The protein is Large ribosomal subunit protein uL3 of Lactobacillus acidophilus (strain ATCC 700396 / NCK56 / N2 / NCFM).